Here is a 549-residue protein sequence, read N- to C-terminus: Dihydroxy-acid dehydratase (549 aa).

D78 lines the Mg(2+) pocket. Position 119 (C119) interacts with [2Fe-2S] cluster. Mg(2+) contacts are provided by D120 and K121. Position 121 is an N6-carboxylysine (K121). C191 provides a ligand contact to [2Fe-2S] cluster. E441 lines the Mg(2+) pocket. S466 functions as the Proton acceptor in the catalytic mechanism.

Belongs to the IlvD/Edd family. Homodimer. It depends on [2Fe-2S] cluster as a cofactor. Mg(2+) serves as cofactor.

It catalyses the reaction (2R)-2,3-dihydroxy-3-methylbutanoate = 3-methyl-2-oxobutanoate + H2O. The enzyme catalyses (2R,3R)-2,3-dihydroxy-3-methylpentanoate = (S)-3-methyl-2-oxopentanoate + H2O. It functions in the pathway amino-acid biosynthesis; L-isoleucine biosynthesis; L-isoleucine from 2-oxobutanoate: step 3/4. The protein operates within amino-acid biosynthesis; L-valine biosynthesis; L-valine from pyruvate: step 3/4. In terms of biological role, functions in the biosynthesis of branched-chain amino acids. Catalyzes the dehydration of (2R,3R)-2,3-dihydroxy-3-methylpentanoate (2,3-dihydroxy-3-methylvalerate) into 2-oxo-3-methylpentanoate (2-oxo-3-methylvalerate) and of (2R)-2,3-dihydroxy-3-methylbutanoate (2,3-dihydroxyisovalerate) into 2-oxo-3-methylbutanoate (2-oxoisovalerate), the penultimate precursor to L-isoleucine and L-valine, respectively. The polypeptide is Dihydroxy-acid dehydratase (Methanothermobacter thermautotrophicus (strain ATCC 29096 / DSM 1053 / JCM 10044 / NBRC 100330 / Delta H) (Methanobacterium thermoautotrophicum)).